The sequence spans 270 residues: MEYIKKLLCTMSVLLLIIFIGGCGNMKDEQKKEEQTNKTDSKEEQIKKSFAKTLDMYPIKNLEDLYDKEGYRDGEFKKGDKGTWTISTDFAKSNKPGEMDSEGMVLHLNRNTRTATGYYTIRTTYDEVGKMTREKNYRVELKNNKIVLLDKVEDENLKHKIENFKFFGQYADFKDLKNYKNGRITINENVPYYEAEYKINNSDGNVKKLRENYPITAKKSPILKLHIDGDIKGSSVGYKQIEYTFSKEKEDETFMSDFLNFGPTKGGNND.

Residues 1–22 form the signal peptide; that stretch reads MEYIKKLLCTMSVLLLIIFIGG. Cys-23 carries N-palmitoyl cysteine lipidation. A lipid anchor (S-diacylglycerol cysteine) is attached at Cys-23.

Belongs to the staphylococcal tandem lipoprotein family.

Its subcellular location is the cell membrane. This is an uncharacterized protein from Staphylococcus aureus (strain bovine RF122 / ET3-1).